We begin with the raw amino-acid sequence, 129 residues long: Small ribosomal subunit protein uS8 (129 aa).

Belongs to the universal ribosomal protein uS8 family. As to quaternary structure, part of the 30S ribosomal subunit.

One of the primary rRNA binding proteins, it binds directly to 16S rRNA central domain where it helps coordinate assembly of the platform of the 30S subunit. The sequence is that of Small ribosomal subunit protein uS8 from Archaeoglobus fulgidus (strain ATCC 49558 / DSM 4304 / JCM 9628 / NBRC 100126 / VC-16).